Consider the following 114-residue polypeptide: Fumarate reductase subunit D (114 aa).

Transmembrane regions (helical) follow at residues isoleucine 27–valine 47, isoleucine 50–proline 70, and tryptophan 94–leucine 114.

This sequence belongs to the FrdD family. In terms of assembly, part of an enzyme complex containing four subunits: a flavoprotein (FrdA), an iron-sulfur protein (FrdB), and two hydrophobic anchor proteins (FrdC and FrdD).

It localises to the cell inner membrane. Functionally, anchors the catalytic components of the fumarate reductase complex to the cell membrane, binds quinones. The chain is Fumarate reductase subunit D from Actinobacillus pleuropneumoniae serotype 3 (strain JL03).